We begin with the raw amino-acid sequence, 209 residues long: Large ribosomal subunit protein uL3 (209 aa).

Residues 126-148 (HGQSRGPMAHGSRYHRRPGSMGP) are disordered.

This sequence belongs to the universal ribosomal protein uL3 family. As to quaternary structure, part of the 50S ribosomal subunit. Forms a cluster with proteins L14 and L19.

Functionally, one of the primary rRNA binding proteins, it binds directly near the 3'-end of the 23S rRNA, where it nucleates assembly of the 50S subunit. This chain is Large ribosomal subunit protein uL3, found in Listeria innocua serovar 6a (strain ATCC BAA-680 / CLIP 11262).